The primary structure comprises 559 residues: Estrogen receptor beta (559 aa).

The interval 1-155 is modulating; the sequence is MAVACSPEKD…SSGGKADLHF (155 aa). Residues 128-148 are disordered; the sequence is TSSKSARRRSQENEEGEVSSG. NR C4-type zinc fingers lie at residues 156–176 and 192–216; these read CAVC…CEGC and CPAT…LHKC. The segment at residues 156–221 is a DNA-binding region (nuclear receptor); the sequence is CAVCHDYASG…RLHKCYNVGM (66 aa). The segment covering 243–254 has biased composition (polar residues); the sequence is RLSSQGRTSGPS. Residues 243–269 are disordered; it reads RLSSQGRTSGPSVLNGPAVGPLNTPQP. An NR LBD domain is found at 273–509; sequence TSKQLIERIM…DLLLEMLDAH (237 aa). The interval 514-559 is disordered; the sequence is SRLPRRSPQQETVEQCDAPARPHSPGTSGPTNTWTPSCTGGRGEPQ. Residues 538–551 are compositionally biased toward polar residues; the sequence is PGTSGPTNTWTPSC.

Belongs to the nuclear hormone receptor family. NR3 subfamily. Binds DNA as a homodimer. Can form a heterodimer with ER-alpha.

It is found in the nucleus. Its function is as follows. Binds estrogens with an affinity similar to that of ER-alpha, and activates expression of reporter genes containing estrogen response elements (ERE) in an estrogen-dependent manner. In Sparus aurata (Gilthead sea bream), this protein is Estrogen receptor beta (esr2).